A 454-amino-acid polypeptide reads, in one-letter code: Rhizobactin siderophore biosynthesis protein RhbE (454 aa).

7 to 13 (AGIGIGP) serves as a coordination point for FAD.

The protein belongs to the lysine N(6)-hydroxylase/L-ornithine N(5)-oxygenase family. Requires FAD as cofactor.

It participates in siderophore biosynthesis; rhizobactin biosynthesis. The chain is Rhizobactin siderophore biosynthesis protein RhbE (rhbE) from Rhizobium meliloti (strain 1021) (Ensifer meliloti).